The following is a 451-amino-acid chain: Chromosomal replication initiator protein DnaA (451 aa).

A domain I, interacts with DnaA modulators region spans residues 1 to 101; it reads MTENETIFWN…TSNHIFSRQT (101 aa). The domain II stretch occupies residues 101 to 110; the sequence is TINSLPAITS. The interval 111–329 is domain III, AAA+ region; that stretch reads DLNPKYSFDN…GALKDISLVA (219 aa). Residues G155, G157, K158, and T159 each coordinate ATP. Positions 330-451 are domain IV, binds dsDNA; that stretch reads NFKEIDKITV…EIETIKNKIK (122 aa).

Belongs to the DnaA family. In terms of assembly, oligomerizes as a right-handed, spiral filament on DNA at oriC.

The protein resides in the cytoplasm. Plays an essential role in the initiation and regulation of chromosomal replication. ATP-DnaA binds to the origin of replication (oriC) to initiate formation of the DNA replication initiation complex once per cell cycle. Binds the DnaA box (a 9 base pair repeat at the origin) and separates the double-stranded (ds)DNA. Forms a right-handed helical filament on oriC DNA; dsDNA binds to the exterior of the filament while single-stranded (ss)DNA is stabiized in the filament's interior. The ATP-DnaA-oriC complex binds and stabilizes one strand of the AT-rich DNA unwinding element (DUE), permitting loading of DNA polymerase. After initiation quickly degrades to an ADP-DnaA complex that is not apt for DNA replication. Binds acidic phospholipids. In Streptococcus uberis (strain ATCC BAA-854 / 0140J), this protein is Chromosomal replication initiator protein DnaA.